Here is a 644-residue protein sequence, read N- to C-terminus: DNA mismatch repair protein MutL (644 aa).

Positions 336 to 400 are disordered; sequence ERPFEPSSPQ…EISRDSSLGE (65 aa). Over residues 373–400 the composition is skewed to basic and acidic residues; that stretch reads SKTHSTWDEASRVDTSRAEISRDSSLGE.

The protein belongs to the DNA mismatch repair MutL/HexB family.

Its function is as follows. This protein is involved in the repair of mismatches in DNA. It is required for dam-dependent methyl-directed DNA mismatch repair. May act as a 'molecular matchmaker', a protein that promotes the formation of a stable complex between two or more DNA-binding proteins in an ATP-dependent manner without itself being part of a final effector complex. The protein is DNA mismatch repair protein MutL of Shewanella sp. (strain MR-7).